Reading from the N-terminus, the 238-residue chain is Tetraspanin-4 (238 aa).

At 1 to 13 (MARACLQAVKYLM) the chain is on the cytoplasmic side. Residues 14–34 (FAFNLLFWLGGCGVLGVGIWL) form a helical membrane-spanning segment. Topologically, residues 35–55 (AATQGSFATLSSSFPSLSAAN) are extracellular. A helical transmembrane segment spans residues 56–76 (LLIITGAFVMAIGFVGCLGAI). The Cytoplasmic portion of the chain corresponds to 77–85 (KENKCLLLT). A helical transmembrane segment spans residues 86-106 (FFLLLLLVFLLEATIAILFFA). Over 107-201 (YTDKIDRYAQ…ETVKVWLQEN (95 aa)) the chain is Extracellular. Asn-152 and Asn-161 each carry an N-linked (GlcNAc...) asparagine glycan. The chain crosses the membrane as a helical span at residues 202 to 222 (LLAVGIFGLCTALVQILGLTF). Over 223–238 (AMTMYCQVVKADTYCA) the chain is Cytoplasmic.

Belongs to the tetraspanin (TM4SF) family. As to quaternary structure, forms a complex with integrins.

The protein localises to the membrane. The polypeptide is Tetraspanin-4 (TSPAN4) (Pongo abelii (Sumatran orangutan)).